Reading from the N-terminus, the 144-residue chain is Transcription antitermination protein NusB (144 aa).

It belongs to the NusB family.

In terms of biological role, involved in transcription antitermination. Required for transcription of ribosomal RNA (rRNA) genes. Binds specifically to the boxA antiterminator sequence of the ribosomal RNA (rrn) operons. The sequence is that of Transcription antitermination protein NusB from Buchnera aphidicola subsp. Baizongia pistaciae (strain Bp).